A 337-amino-acid chain; its full sequence is Tetraacyldisaccharide 4'-kinase (337 aa).

51-58 (HLGGAGKT) is an ATP binding site.

This sequence belongs to the LpxK family.

The enzyme catalyses a lipid A disaccharide + ATP = a lipid IVA + ADP + H(+). It participates in glycolipid biosynthesis; lipid IV(A) biosynthesis; lipid IV(A) from (3R)-3-hydroxytetradecanoyl-[acyl-carrier-protein] and UDP-N-acetyl-alpha-D-glucosamine: step 6/6. Its function is as follows. Transfers the gamma-phosphate of ATP to the 4'-position of a tetraacyldisaccharide 1-phosphate intermediate (termed DS-1-P) to form tetraacyldisaccharide 1,4'-bis-phosphate (lipid IVA). In Nitrobacter winogradskyi (strain ATCC 25391 / DSM 10237 / CIP 104748 / NCIMB 11846 / Nb-255), this protein is Tetraacyldisaccharide 4'-kinase.